A 1072-amino-acid polypeptide reads, in one-letter code: DNA-directed RNA polymerase subunit beta (1072 aa).

The protein belongs to the RNA polymerase beta chain family. As to quaternary structure, in plastids the minimal PEP RNA polymerase catalytic core is composed of four subunits: alpha, beta, beta', and beta''. When a (nuclear-encoded) sigma factor is associated with the core the holoenzyme is formed, which can initiate transcription.

It is found in the plastid. Its subcellular location is the chloroplast. It catalyses the reaction RNA(n) + a ribonucleoside 5'-triphosphate = RNA(n+1) + diphosphate. DNA-dependent RNA polymerase catalyzes the transcription of DNA into RNA using the four ribonucleoside triphosphates as substrates. The protein is DNA-directed RNA polymerase subunit beta of Capsella bursa-pastoris (Shepherd's purse).